We begin with the raw amino-acid sequence, 1534 residues long: Dicer-like protein 2 (1534 aa).

Residues 1 to 10 are compositionally biased toward basic and acidic residues; it reads MDQDPRKDNP. A disordered region spans residues 1-36; the sequence is MDQDPRKDNPVEMDVDRDDSSQDPDDNESFKSALDE. Acidic residues predominate over residues 11–27; the sequence is VEMDVDRDDSSQDPDDN. The Helicase ATP-binding domain occupies 65-249; sequence TPAALTARAY…IEKLEQVLDA (185 aa). 78-85 contacts ATP; the sequence is MFEASLKQ. The short motif at 192–195 is the DEAH box element; that stretch reads DEAH. Residues 404 to 575 form the Helicase C-terminal domain; that stretch reads KVQTLLKVLA…NAELELLDDP (172 aa). The Dicer dsRNA-binding fold domain occupies 597–700; the sequence is ARSHLNHFCA…LPTKVSDFLA (104 aa). RNase III domains follow at residues 959–1107 and 1153–1353; these read MSLV…MCGG and LEPL…VDSG. Mg(2+) is bound by residues E1193, D1339, and E1342. Positions 1383 to 1483 constitute a DRBM domain; sequence HPNVELQILA…AEKGCLVIKA (101 aa). Basic and acidic residues predominate over residues 1492-1504; it reads KAAAKEDKGHNTE. Residues 1492-1534 are disordered; the sequence is KAAAKEDKGHNTENGDANADNGQSGEKEEVPDCRDADGDTVMN. Residues 1505–1515 show a composition bias toward polar residues; sequence NGDANADNGQS. Basic and acidic residues predominate over residues 1516 to 1528; it reads GEKEEVPDCRDAD.

This sequence belongs to the helicase family. Dicer subfamily. The cofactor is Mg(2+). Requires Mn(2+) as cofactor.

Dicer-like endonuclease involved in cleaving double-stranded RNA in the RNA interference (RNAi) pathway. Produces 21 to 25 bp dsRNAs (siRNAs) which target the selective destruction of homologous RNAs leading to sequence-specific suppression of gene expression, called post-transcriptional gene silencing (PTGS). Part of a broad host defense response against viral infection and transposons. Controls the expression of the non-LTR retrotransposon Tad in the African strain, Adiomopoume. The chain is Dicer-like protein 2 (dcl-2) from Neurospora crassa (strain ATCC 24698 / 74-OR23-1A / CBS 708.71 / DSM 1257 / FGSC 987).